We begin with the raw amino-acid sequence, 595 residues long: CDPK-related kinase 3 (595 aa).

Residues 1 to 131 (MGQCYGKVNQ…GTEPEQSLDK (131 aa)) form a disordered region. Glycine 2 is lipidated: N-myristoyl glycine. Positions 20 to 37 (NTTTYVVSGDGNQIQPLT) are enriched in polar residues. Positions 111-124 (KPKEGPIPEERGTE) are enriched in basic and acidic residues. Residues 143-405 (YELGKEVGRG…AVQALTHPWL (263 aa)) form the Protein kinase domain. Residues 149–157 (VGRGHFGHT) and lysine 175 each bind ATP. The active-site Proton acceptor is aspartate 271. The residue at position 311 (serine 311) is a Phosphoserine. Residue serine 353 is modified to Phosphoserine; by CPK1 and CPK34. The segment at 409 to 439 (SRVIPLDILIYKLVKAYLHATPLRRAALKAL) is autoinhibitory domain. The tract at residues 428-448 (ATPLRRAALKALAKALTENEL) is calmodulin binding (CaMBD). EF-hand domains are found at residues 446–482 (NELV…ATDA), 483–518 (MRES…IHQL), 519–558 (EAVD…GASA), and 559–588 (YGHL…VTLR). The Ca(2+) site is built by asparagine 461, aspartate 463, serine 465, lysine 502, glutamate 507, asparagine 540, glutamate 547, serine 568, aspartate 570, and lysine 572. A Phosphoserine modification is found at serine 574.

This sequence belongs to the protein kinase superfamily. Ser/Thr protein kinase family. CDPK subfamily. In terms of assembly, binds calmodulin (CaM) in a calcium-dependent manner. Interacts with GLN1-1. In terms of processing, autophosphorylated. In terms of tissue distribution, ubiquitously expressed with higher levels in siliques and roots, especially at the root cap. Particularly present in vascular bundles of stems and leaves.

The protein resides in the cytoplasm. It localises to the membrane. It carries out the reaction L-seryl-[protein] + ATP = O-phospho-L-seryl-[protein] + ADP + H(+). The catalysed reaction is L-threonyl-[protein] + ATP = O-phospho-L-threonyl-[protein] + ADP + H(+). Not activated by calcium. Autophosphorylation may play an important role in the regulation of the kinase activity. Stimulated by magnesium ions (optimum at 10-15 mM) and manganese ions. Its function is as follows. May play a role in signal transduction pathways that involve calcium as a second messenger. Serine/threonine kinase that phosphorylates histone H3 an GLN1-1. This is CDPK-related kinase 3 (CRK3) from Arabidopsis thaliana (Mouse-ear cress).